The chain runs to 1311 residues: Cyclin-G-associated kinase (1311 aa).

Serine 2 is modified (N-acetylserine). Phosphoserine is present on residues serine 2 and serine 16. A Protein kinase domain is found at 40–314 (LRVRRVLAEG…SIAEVVHQLQ (275 aa)). The active-site Proton acceptor is aspartate 173. The Phosphatase tensin-type domain occupies 399–566 (SVANYAKGDL…EYMCDMVAEE (168 aa)). Serine 456 bears the Phosphoserine mark. The C2 tensin-type domain occupies 572–710 (SKPILVRAVV…FQVNLEVEVE (139 aa)). Disordered stretches follow at residues 709–729 (VEPR…SMRG) and 749–788 (FGKP…SADA). Position 770 is a phosphoserine (serine 770). The span at 770–788 (SPEAEPTDSDSPPSSSADA) shows a compositional bias: low complexity. A Phosphothreonine modification is found at threonine 776. Serine 783 is subject to Phosphoserine. The residue at position 794 (threonine 794) is a Phosphothreonine. Disordered regions lie at residues 801-860 (KEAE…VQQD), 913-1035 (CLLG…DLLG), and 1047-1150 (AVAP…PNYA). A phosphoserine mark is found at serine 811, serine 826, serine 829, serine 834, and serine 939. Composition is skewed to low complexity over residues 925 to 939 (PPED…LLAS) and 950 to 966 (PRGG…PLLP). Polar residues-rich tracts occupy residues 967-976 (SSGNNSQPCS) and 1070-1080 (SQASWTKSQNP). At serine 1096 the chain carries Phosphoserine. Residues 1109–1124 (TATTPKGSSSWQTSRP) show a composition bias toward polar residues. Arginine 1123 carries the post-translational modification Omega-N-methylarginine. Phosphoserine is present on residues serine 1176 and serine 1185. Residues 1247 to 1311 (SRWTPVGMAD…FENQGSRPLF (65 aa)) enclose the J domain.

The protein belongs to the protein kinase superfamily. Ser/Thr protein kinase family. As to expression, ubiquitous. Highest in testis.

It is found in the cytoplasm. The protein resides in the perinuclear region. The protein localises to the golgi apparatus. It localises to the trans-Golgi network. Its subcellular location is the cell junction. It is found in the focal adhesion. The protein resides in the cytoplasmic vesicle. The protein localises to the clathrin-coated vesicle. It catalyses the reaction L-seryl-[protein] + ATP = O-phospho-L-seryl-[protein] + ADP + H(+). The enzyme catalyses L-threonyl-[protein] + ATP = O-phospho-L-threonyl-[protein] + ADP + H(+). Associates with cyclin G and CDK5. Seems to act as an auxilin homolog that is involved in the uncoating of clathrin-coated vesicles by Hsc70 in non-neuronal cells. Expression oscillates slightly during the cell cycle, peaking at G1. May play a role in clathrin-mediated endocytosis and intracellular trafficking, and in the dynamics of clathrin assembly/disassembly. The protein is Cyclin-G-associated kinase of Homo sapiens (Human).